A 231-amino-acid polypeptide reads, in one-letter code: Large ribosomal subunit protein uL1 (231 aa).

Belongs to the universal ribosomal protein uL1 family. In terms of assembly, part of the 50S ribosomal subunit.

Functionally, binds directly to 23S rRNA. The L1 stalk is quite mobile in the ribosome, and is involved in E site tRNA release. Its function is as follows. Protein L1 is also a translational repressor protein, it controls the translation of the L11 operon by binding to its mRNA. This chain is Large ribosomal subunit protein uL1, found in Ruthia magnifica subsp. Calyptogena magnifica.